The following is a 298-amino-acid chain: MIYVENKDLVIPGEVLADDEYYSGRGTFKENGKICSSLMGLVSLRNKKIRVIPLKSKYVPKKGDVVIGKIKDVRFSMWDVDINSPYSGILPAFEVFGREKKELNKVFDVGDVLFLRVVDVDEVKKVKLGLKGRGMGKFRGGIIVDITPTKVPRLIGKKGSMINMIKDKTNCKIIVGQNGLVWVKGEEDMEQLTKDIIHMIEAEAHTSGLTNKVKNKLSLAIDGELPQEDDYSDDYEELEKPKLQNFKEELEQEEKEEQSKKDSTDFYKVIEELKKKNKKDKPLSYGNNSGNSYILNNR.

The 69-residue stretch at 63 to 131 (GDVVIGKIKD…EVKKVKLGLK (69 aa)) folds into the S1 motif domain. Residues 139–197 (RGGIIVDITPTKVPRLIGKKGSMINMIKDKTNCKIIVGQNGLVWVKGEEDMEQLTKDII) form the KH domain. The disordered stretch occupies residues 276 to 298 (KNKKDKPLSYGNNSGNSYILNNR). Residues 285-298 (YGNNSGNSYILNNR) are compositionally biased toward polar residues.

It belongs to the RRP4 family. Component of the archaeal exosome complex. Forms a trimer of Rrp4 and/or Csl4 subunits. The trimer associates with a hexameric ring-like arrangement composed of 3 Rrp41-Rrp42 heterodimers.

It is found in the cytoplasm. In terms of biological role, non-catalytic component of the exosome, which is a complex involved in RNA degradation. Increases the RNA binding and the efficiency of RNA degradation. Confers strong poly(A) specificity to the exosome. The polypeptide is Exosome complex component Rrp4 (Methanobrevibacter smithii (strain ATCC 35061 / DSM 861 / OCM 144 / PS)).